Here is a 126-residue protein sequence, read N- to C-terminus: Large ribosomal subunit protein bL12 (126 aa).

Belongs to the bacterial ribosomal protein bL12 family. As to quaternary structure, homodimer. Part of the ribosomal stalk of the 50S ribosomal subunit. Forms a multimeric L10(L12)X complex, where L10 forms an elongated spine to which 2 to 4 L12 dimers bind in a sequential fashion. Binds GTP-bound translation factors.

Its function is as follows. Forms part of the ribosomal stalk which helps the ribosome interact with GTP-bound translation factors. Is thus essential for accurate translation. In Bifidobacterium longum subsp. infantis (strain ATCC 15697 / DSM 20088 / JCM 1222 / NCTC 11817 / S12), this protein is Large ribosomal subunit protein bL12.